A 443-amino-acid chain; its full sequence is Dihydroorotase (443 aa).

Positions 80 and 82 each coordinate Zn(2+). Substrate contacts are provided by residues His82 to Arg84 and Asn114. Zn(2+)-binding residues include Asp170, His197, and His251. Residue Asn297 participates in substrate binding. Residue Asp324 participates in Zn(2+) binding. Residue Asp324 is part of the active site. Residues His328 and Phe342–Gly343 contribute to the substrate site.

This sequence belongs to the metallo-dependent hydrolases superfamily. DHOase family. Class I DHOase subfamily. Zn(2+) serves as cofactor.

It catalyses the reaction (S)-dihydroorotate + H2O = N-carbamoyl-L-aspartate + H(+). The protein operates within pyrimidine metabolism; UMP biosynthesis via de novo pathway; (S)-dihydroorotate from bicarbonate: step 3/3. Catalyzes the reversible cyclization of carbamoyl aspartate to dihydroorotate. In Wolbachia sp. subsp. Brugia malayi (strain TRS), this protein is Dihydroorotase.